The following is a 241-amino-acid chain: Thiamine import ATP-binding protein ThiQ (241 aa).

One can recognise an ABC transporter domain in the interval 2 to 239; that stretch reads IQLDKLNHCY…PKDEVLIQYL (238 aa). 41–48 is an ATP binding site; that stretch reads GPSGAGKS.

Belongs to the ABC transporter superfamily. Thiamine importer (TC 3.A.1.19.1) family. As to quaternary structure, the complex is composed of two ATP-binding proteins (ThiQ), two transmembrane proteins (ThiP) and a solute-binding protein (ThiB).

The protein localises to the cell inner membrane. The catalysed reaction is thiamine(out) + ATP + H2O = thiamine(in) + ADP + phosphate + H(+). Part of the ABC transporter complex ThiBPQ involved in thiamine import. Responsible for energy coupling to the transport system. This chain is Thiamine import ATP-binding protein ThiQ, found in Photobacterium profundum (strain SS9).